The following is a 984-amino-acid chain: Lateral signaling target protein 2 homolog (984 aa).

Disordered regions lie at residues P308–E462, Y508–S527, R539–S642, and D749–A900. 4 stretches are compositionally biased toward low complexity: residues T326–T356, N369–N380, T387–A404, and P412–W433. Positions S434 to E462 are enriched in acidic residues. Residues S544 and S545 each carry the phosphoserine modification. Positions R571–R611 are enriched in basic residues. A compositionally biased stretch (low complexity) spans L630–S642. Polar residues-rich tracts occupy residues A760–L779 and S789–L806. S805 is modified (phosphoserine). Low complexity-rich tracts occupy residues A811 to A869 and P886 to P899. Residues D904–V964 form an FYVE-type zinc finger. Residues C910, C913, C926, C929, C934, C937, C956, and C959 each coordinate Zn(2+).

This sequence belongs to the lst-2 family.

In terms of biological role, negative regulator of epidermal growth factor receptor (EGFR) signaling. This Drosophila yakuba (Fruit fly) protein is Lateral signaling target protein 2 homolog.